Reading from the N-terminus, the 2754-residue chain is Neurobeachin-like protein 2 (2754 aa).

Disordered stretches follow at residues 1298–1338 and 1364–1438; these read TAGS…SEAP and SVGS…QQTS. Composition is skewed to pro residues over residues 1301–1323 and 1388–1400; these read SPPP…PPTE and TPSP…PFPA. The segment covering 1425–1437 has biased composition (polar residues); that stretch reads GDDTSNTSNPQQT. Position 1647 is a phosphoserine (S1647). T1867 is subject to Phosphothreonine. A BEACH-type PH domain is found at 1915-2040; it reads EQREKLVLSA…VRNQVYSWLL (126 aa). The BEACH domain occupies 2053-2345; sequence RSPQEMLRAS…QLLKEPHPTR (293 aa). 7 WD repeats span residues 2386–2424, 2448–2491, 2494–2531, 2544–2582, 2589–2631, 2639–2674, and 2682–2717; these read LVLA…SWLP, RLLS…ALPR, LLSQ…VWRL, KPVQ…IHTV, AALR…TYSL, KLRA…ILQL, and PPLP…VVAG. Phosphoserine is present on residues S2739 and S2742.

It belongs to the WD repeat neurobeachin family. Expressed in megakaryocytes.

It localises to the endoplasmic reticulum. In terms of biological role, probably involved in thrombopoiesis. Plays a role in the development or secretion of alpha-granules, that contain several growth factors important for platelet biogenesis. In Homo sapiens (Human), this protein is Neurobeachin-like protein 2 (NBEAL2).